We begin with the raw amino-acid sequence, 156 residues long: Small ribosomal subunit protein eS19A (156 aa).

Belongs to the eukaryotic ribosomal protein eS19 family.

The protein is Small ribosomal subunit protein eS19A (RpS19a) of Drosophila melanogaster (Fruit fly).